The sequence spans 702 residues: Phosphoglycerol transferase I (702 aa).

The next 3 membrane-spanning stretches (helical) occupy residues 5-24 (LLVSLLLLLWLLVASPRLAW), 73-95 (GYIAVFVGMLLLSLSPLLLVRIR), and 102-124 (GGGAVFAGFVGMLLVGIAASPLY).

It belongs to the OpgB family.

The protein localises to the cell inner membrane. The catalysed reaction is a phosphatidylglycerol + a membrane-derived-oligosaccharide D-glucose = a 1,2-diacyl-sn-glycerol + a membrane-derived-oligosaccharide 6-(glycerophospho)-D-glucose.. The protein operates within glycan metabolism; osmoregulated periplasmic glucan (OPG) biosynthesis. In terms of biological role, transfers a phosphoglycerol residue from phosphatidylglycerol to the membrane-bound nascent glucan backbones. The chain is Phosphoglycerol transferase I from Xanthomonas axonopodis pv. citri (strain 306).